We begin with the raw amino-acid sequence, 683 residues long: E3 ubiquitin-protein ligase RNF103 (683 aa).

The next 4 membrane-spanning stretches (helical) occupy residues 6–26, 326–346, 366–386, and 411–431; these read FFLL…EAIV, LFVL…FITQ, LLII…LDSF, and MFYT…GLLI. The span at 525–542 shows a compositional bias: acidic residues; the sequence is EEMSESSQDTENDSDSDN. Residues 525–548 are disordered; sequence EEMSESSQDTENDSDSDNMDTFSS. The segment at 619–661 adopts an RING-type zinc-finger fold; the sequence is CVVCLENFENGCLLMGLPCGHVFHQNCIVMWLAGGRHCCPVCR.

In terms of assembly, interacts with DERL1 and VCP. As to expression, highly expressed in the normal cerebellum but not in the cerebral cortex.

The protein localises to the endoplasmic reticulum membrane. It carries out the reaction S-ubiquitinyl-[E2 ubiquitin-conjugating enzyme]-L-cysteine + [acceptor protein]-L-lysine = [E2 ubiquitin-conjugating enzyme]-L-cysteine + N(6)-ubiquitinyl-[acceptor protein]-L-lysine.. It participates in protein modification; protein ubiquitination. Its function is as follows. Acts as an E2-dependent E3 ubiquitin-protein ligase, probably involved in the ER-associated protein degradation pathway. The sequence is that of E3 ubiquitin-protein ligase RNF103 (Rnf103) from Mus musculus (Mouse).